A 104-amino-acid polypeptide reads, in one-letter code: Large ribosomal subunit protein uL24 (104 aa).

Belongs to the universal ribosomal protein uL24 family. Part of the 50S ribosomal subunit.

One of two assembly initiator proteins, it binds directly to the 5'-end of the 23S rRNA, where it nucleates assembly of the 50S subunit. Its function is as follows. One of the proteins that surrounds the polypeptide exit tunnel on the outside of the subunit. The sequence is that of Large ribosomal subunit protein uL24 from Corynebacterium kroppenstedtii (strain DSM 44385 / JCM 11950 / CIP 105744 / CCUG 35717).